The sequence spans 85 residues: Large ribosomal subunit protein bL27 (85 aa).

A disordered region spans residues 1-21; the sequence is MAHKKGGGTTRNGRDSESKRL.

It belongs to the bacterial ribosomal protein bL27 family.

The protein is Large ribosomal subunit protein bL27 of Janthinobacterium sp. (strain Marseille) (Minibacterium massiliensis).